The primary structure comprises 156 residues: Endoribonuclease YbeY (156 aa).

3 residues coordinate Zn(2+): histidine 122, histidine 126, and histidine 132.

Belongs to the endoribonuclease YbeY family. Requires Zn(2+) as cofactor.

It is found in the cytoplasm. Single strand-specific metallo-endoribonuclease involved in late-stage 70S ribosome quality control and in maturation of the 3' terminus of the 16S rRNA. The sequence is that of Endoribonuclease YbeY from Bacillus cereus (strain G9842).